A 229-amino-acid polypeptide reads, in one-letter code: Urease accessory protein UreF (229 aa).

The protein belongs to the UreF family. In terms of assembly, ureD, UreF and UreG form a complex that acts as a GTP-hydrolysis-dependent molecular chaperone, activating the urease apoprotein by helping to assemble the nickel containing metallocenter of UreC. The UreE protein probably delivers the nickel.

The protein localises to the cytoplasm. Functionally, required for maturation of urease via the functional incorporation of the urease nickel metallocenter. The sequence is that of Urease accessory protein UreF from Ralstonia pickettii (strain 12J).